Here is a 298-residue protein sequence, read N- to C-terminus: MLQTTSLSAMRIFEAAARLGSFRAAAEELNLSPSAVSHAIMRLERDLGVALFERTTRSVSLTVAGQTLLNHASNAFEELRRGVEQISSNKAQLLRLHCAPSFAAQVLSPRLPQFLKENPGIEVRVAASTNYARFVDGLFDADIVYGEPLNREDLIVIPLSEEIVLPLCAPDLAHQIKSPRDLFHQPLIRSDLKRIQWIDWFEANDLGPPPSPSMSFDRSFLAVDAAVNGLGIALESDVLARRELESGKLVRPLHRICRDNRYIGHYLAYPKSGSQRRLARAFADWLTRECQPASTGSE.

Positions 5-62 (TSLSAMRIFEAAARLGSFRAAAEELNLSPSAVSHAIMRLERDLGVALFERTTRSVSLT) constitute an HTH lysR-type domain. The segment at residues 22–42 (FRAAAEELNLSPSAVSHAIMR) is a DNA-binding region (H-T-H motif).

The protein belongs to the LysR transcriptional regulatory family.

This is an uncharacterized protein from Sinorhizobium fredii (strain NBRC 101917 / NGR234).